The following is a 648-amino-acid chain: Bifunctional lysine-specific demethylase and histidyl-hydroxylase NO66 (648 aa).

Residues 1–168 (MSKVSSIFDT…KGAKAAKKNK (168 aa)) are disordered. Residues 17 to 28 (PATTENGAAAKP) show a composition bias toward low complexity. Residues 109-119 (DHRKHKEKLRK) are compositionally biased toward basic residues. The span at 123 to 137 (GVENSRQAAASTSML) shows a compositional bias: polar residues. A compositionally biased stretch (basic residues) spans 155–168 (PVHHKGAKAAKKNK). In terms of domain architecture, JmjC spans 308–453 (CSIRMLNPQT…DLLELYLPHA (146 aa)). Fe cation is bound by residues H354, D356, and H419.

Belongs to the ROX family. NO66 subfamily. Requires Fe(2+) as cofactor.

The protein resides in the nucleus. It carries out the reaction N(6),N(6)-dimethyl-L-lysyl(36)-[histone H3] + 2 2-oxoglutarate + 2 O2 = L-lysyl(36)-[histone H3] + 2 formaldehyde + 2 succinate + 2 CO2. In terms of biological role, oxygenase that can act as both a histone lysine demethylase and a ribosomal histidine hydroxylase. Specifically demethylates 'Lys-4' (H3K4me) and 'Lys-36' (H3K36me) of histone H3, thereby playing a central role in histone code. The sequence is that of Bifunctional lysine-specific demethylase and histidyl-hydroxylase NO66 from Culex quinquefasciatus (Southern house mosquito).